We begin with the raw amino-acid sequence, 185 residues long: Elongation factor P (185 aa).

The protein belongs to the elongation factor P family.

Its subcellular location is the cytoplasm. It participates in protein biosynthesis; polypeptide chain elongation. In terms of biological role, involved in peptide bond synthesis. Stimulates efficient translation and peptide-bond synthesis on native or reconstituted 70S ribosomes in vitro. Probably functions indirectly by altering the affinity of the ribosome for aminoacyl-tRNA, thus increasing their reactivity as acceptors for peptidyl transferase. In Bordetella avium (strain 197N), this protein is Elongation factor P.